The chain runs to 290 residues: Fructose-1,6-bisphosphatase class 1 (290 aa).

Mg(2+) contacts are provided by glutamate 78, aspartate 96, leucine 98, and aspartate 99. Residues aspartate 99–serine 102, tyrosine 201, and lysine 226 contribute to the substrate site. Glutamate 232 contributes to the Mg(2+) binding site.

This sequence belongs to the FBPase class 1 family. In terms of assembly, homotetramer. Mg(2+) is required as a cofactor.

The protein localises to the cytoplasm. The enzyme catalyses beta-D-fructose 1,6-bisphosphate + H2O = beta-D-fructose 6-phosphate + phosphate. It participates in carbohydrate biosynthesis; gluconeogenesis. This Helicobacter pylori (strain ATCC 700392 / 26695) (Campylobacter pylori) protein is Fructose-1,6-bisphosphatase class 1.